The chain runs to 141 residues: Putative pre-16S rRNA nuclease (141 aa).

Belongs to the YqgF nuclease family.

It localises to the cytoplasm. In terms of biological role, could be a nuclease involved in processing of the 5'-end of pre-16S rRNA. In Natranaerobius thermophilus (strain ATCC BAA-1301 / DSM 18059 / JW/NM-WN-LF), this protein is Putative pre-16S rRNA nuclease.